Here is a 303-residue protein sequence, read N- to C-terminus: UDP-3-O-acyl-N-acetylglucosamine deacetylase (303 aa).

Residues His-78, His-237, and Asp-241 each contribute to the Zn(2+) site. Residue His-264 is the Proton donor of the active site.

It belongs to the LpxC family. The cofactor is Zn(2+).

It carries out the reaction a UDP-3-O-[(3R)-3-hydroxyacyl]-N-acetyl-alpha-D-glucosamine + H2O = a UDP-3-O-[(3R)-3-hydroxyacyl]-alpha-D-glucosamine + acetate. The protein operates within glycolipid biosynthesis; lipid IV(A) biosynthesis; lipid IV(A) from (3R)-3-hydroxytetradecanoyl-[acyl-carrier-protein] and UDP-N-acetyl-alpha-D-glucosamine: step 2/6. Functionally, catalyzes the hydrolysis of UDP-3-O-myristoyl-N-acetylglucosamine to form UDP-3-O-myristoylglucosamine and acetate, the committed step in lipid A biosynthesis. This is UDP-3-O-acyl-N-acetylglucosamine deacetylase from Coxiella burnetii (strain CbuG_Q212) (Coxiella burnetii (strain Q212)).